Reading from the N-terminus, the 384-residue chain is FAD-dependent urate hydroxylase (384 aa).

FAD contacts are provided by residues Gly-11, 30-31 (EA), Ser-43, and Val-125. Substrate contacts are provided by residues Asn-178, Arg-204, and 216–218 (YFF). Residues Asp-285 and 295 to 299 (GQGGC) each bind FAD.

The protein belongs to the FAD-dependent urate hydroxylase family. FAD is required as a cofactor.

The catalysed reaction is urate + NADH + O2 + H(+) = 5-hydroxyisourate + NAD(+) + H2O. The protein operates within purine metabolism; urate degradation. Its function is as follows. Catalyzes the hydroxylation of uric acid to 5-hydroxyisourate. In Klebsiella oxytoca, this protein is FAD-dependent urate hydroxylase (hpxO).